The sequence spans 193 residues: ATP-dependent Clp protease proteolytic subunit (193 aa).

Ser98 acts as the Nucleophile in catalysis. Residue His123 is part of the active site.

The protein belongs to the peptidase S14 family. In terms of assembly, fourteen ClpP subunits assemble into 2 heptameric rings which stack back to back to give a disk-like structure with a central cavity, resembling the structure of eukaryotic proteasomes.

It localises to the cytoplasm. It carries out the reaction Hydrolysis of proteins to small peptides in the presence of ATP and magnesium. alpha-casein is the usual test substrate. In the absence of ATP, only oligopeptides shorter than five residues are hydrolyzed (such as succinyl-Leu-Tyr-|-NHMec, and Leu-Tyr-Leu-|-Tyr-Trp, in which cleavage of the -Tyr-|-Leu- and -Tyr-|-Trp bonds also occurs).. Functionally, cleaves peptides in various proteins in a process that requires ATP hydrolysis. Has a chymotrypsin-like activity. Plays a major role in the degradation of misfolded proteins. The sequence is that of ATP-dependent Clp protease proteolytic subunit from Haemophilus influenzae (strain PittEE).